We begin with the raw amino-acid sequence, 496 residues long: UDP-glycosyltransferase 84A2 (496 aa).

His23 (proton acceptor) is an active-site residue. His23 provides a ligand contact to an anthocyanidin. Residues Gln352, His367, Trp370, Asn371, Ser372, and Glu375 each coordinate UDP-alpha-D-glucose. An anthocyanidin is bound at residue Gly390. Residues Asp391 and Gln392 each contribute to the UDP-alpha-D-glucose site.

This sequence belongs to the UDP-glycosyltransferase family. As to expression, expressed in roots, cotyledons, leaf veins and trichomes.

It catalyses the reaction (E)-sinapate + UDP-alpha-D-glucose = 1-O-(trans-sinapoyl)-beta-D-glucose + UDP. Sinapate glucosyltransferase (SGT) required for the biosynthesis of the glucose ester sinapoylglucose and subsequently sinapoylmalate and sinapoylcholine. Is the major SGT activity in plant. Plays an important role in sinapoylation of anthocyanins. Sinapoylglucose produced by UGT84A2 is a significant source of sinapoyl moieties for anthocyanins. Indole-3-butyric acid (IBA)-specific glucosyltransferase that catalyzes the glucosylation of the auxin IBA, but not indole-3-acetic acid (IAA). May be involved in flowering regulation through IBA-mediated transcriptional repression of the auxin-response factors ARF6 and ARF8 and downstream flowering pathway genes. Can glucosylate the phytotoxic xenobiotic compound 2,4,5-trichlorophenol (TCP). This is UDP-glycosyltransferase 84A2 from Arabidopsis thaliana (Mouse-ear cress).